We begin with the raw amino-acid sequence, 288 residues long: Polyprenyl transferase eriF (288 aa).

6 helical membrane-spanning segments follow: residues 24–44 (ASIIPGSIFAVGAMRGLTLPL), 51–71 (YIFLVTWLTPYIYFFTLLNQV), 101–121 (IAAFSVFLGVALYEPSLLPET), 145–165 (CIAMATGAWALLSASWKAISP), 215–235 (FIITFLALPAACCILSLGGIF), and 268–288 (FYTYIFCFILMLSSMDSHGLI).

It belongs to the UbiA prenyltransferase family. It depends on Mg(2+) as a cofactor.

It localises to the membrane. In terms of biological role, polyprenyl transferase; part of the gene cluster that mediates the biosynthesis of erinacines, cyathane-xylosides that show unique biological activities, including leishmanicidal activity, stimulating activity for nerve growth-factor synthesis, and agonistic activity toward the kappa opioid receptor. The role of eriF within the pathway has still to be determined. The first step of the erinacines biosynthesis pathway is catalyzed by the geranylgeranyl diphosphate (GGPP) synthase eriE via conversion of farnesyl pyrophosphate and isopentyl pyrophosphate into geranylgeranyl pyrophosphate (GGPP). GGPP is then substrate of the diterpene cyclase eriG for the production of cyatha-3,12-diene. The cytochrome P450 monooxygenase eriI then hydroxylates cyatha-3,12-diene at C-14 of the seven-membered ring to produce erinacol, which is further hydroxylated at C-15 by the cytochrome P450 monooxygenase eriC to yield cyathadiol. The cytochrome P450 monooxygenase eriA then catalyzes C-11 hydroxylation in the presence of the short chain dehydrogenase/reductase (SDR) eriH, which leads to the production of cyathatriol. The acetyltransferase eriL converts cyathatriol into 11-O-acetyl-cyathatriol. The SDR eriH catalyzes further oxidation of 11-O-acetyl-cyathatriol into 1-O-acetylcyathin A3. Finally, the glycosyl transferase eriJ tranfers xylose from UDP-xylose onto C-14 of 11-O-acetyl-cyathatriol to form eracine Q. EriJ is also able to convert 11-O-acetyl-cyathatriol to eracine Q2 by using UDP-D-glucose as cosubstrate, but at a lower rate. This is Polyprenyl transferase eriF from Hericium erinaceus (Lion's mane mushroom).